The following is a 411-amino-acid chain: Envelope glycoprotein G (411 aa).

The signal sequence occupies residues 1-19; sequence MLTVLAALSLLSLLTSATG. N-linked (GlcNAc...) asparagine; by host glycans are attached at residues Asn83, Asn138, Asn222, Asn245, and Asn317. Composition is skewed to polar residues over residues 306–327 and 334–345; these read VPSS…SNSP and SVNSDDSTHTGG. Positions 306–345 are disordered; sequence VPSSAAESSLENQSTQEESNSPEVAHLRSVNSDDSTHTGG. Residues 363-379 traverse the membrane as a helical segment; that stretch reads CLALIGLGTCAMIGLIV. A glycan (N-linked (GlcNAc...) asparagine; by host) is linked at Asn392.

The protein belongs to the alphaherpesvirinae glycoprotein G family.

It is found in the virion membrane. In terms of biological role, chemokine-binding protein that inhibits neutrophils' chemotaxis. This chain is Envelope glycoprotein G (gG), found in Equus caballus (Horse).